The sequence spans 461 residues: Cysteine--tRNA ligase (461 aa).

Cysteine 28 is a Zn(2+) binding site. Residues 30 to 40 (MTVYDYCHLGH) carry the 'HIGH' region motif. Zn(2+) is bound by residues cysteine 212, histidine 237, and glutamate 241. Residues 269–273 (KMSKS) carry the 'KMSKS' region motif. Residue lysine 272 coordinates ATP.

It belongs to the class-I aminoacyl-tRNA synthetase family. As to quaternary structure, monomer. Zn(2+) is required as a cofactor.

It is found in the cytoplasm. It catalyses the reaction tRNA(Cys) + L-cysteine + ATP = L-cysteinyl-tRNA(Cys) + AMP + diphosphate. The sequence is that of Cysteine--tRNA ligase from Aromatoleum aromaticum (strain DSM 19018 / LMG 30748 / EbN1) (Azoarcus sp. (strain EbN1)).